Consider the following 148-residue polypeptide: Iron/alpha-ketoglutarate-dependent dioxygenase ausU (148 aa).

2 residues coordinate Fe cation: H45 and D47.

This sequence belongs to the PhyH family. Homodimer. Fe cation is required as a cofactor.

It functions in the pathway secondary metabolite biosynthesis; terpenoid biosynthesis. In terms of biological role, iron/alpha-ketoglutarate-dependent dioxygenase; part of the gene cluster B that mediates the biosynthesis of austinol and dehydroaustinol, two fungal meroterpenoids. The first step of the pathway is the synthesis of 3,5-dimethylorsellinic acid by the polyketide synthase ausA. 3,5-dimethylorsellinic acid is then prenylated by the polyprenyl transferase ausN. Further epoxidation by the FAD-dependent monooxygenase ausM and cyclization by the probable terpene cyclase ausL lead to the formation of protoaustinoid A. Protoaustinoid A is then oxidized to spiro-lactone preaustinoid A3 by the combined action of the FAD-binding monooxygenases ausB and ausC, and the dioxygenase ausE. Acid-catalyzed keto-rearrangement and ring contraction of the tetraketide portion of preaustinoid A3 by ausJ lead to the formation of preaustinoid A4. The aldo-keto reductase ausK, with the help of ausH, is involved in the next step by transforming preaustinoid A4 into isoaustinone which is in turn hydroxylated by the P450 monooxygenase ausI to form austinolide. Finally, the cytochrome P450 monooxygenase ausG modifies austinolide to austinol. Austinol can be further modified to dehydroaustinol which forms a diffusible complex with diorcinol that initiates conidiation. Due to genetic rearrangements of the clusters and the subsequent loss of some enzymes, the end products of the Emericella nidulans austinoid biosynthesis clusters are austinol and dehydroaustinol, even if additional enzymes, such as the O-acetyltransferase ausQ and the cytochrome P450 monooxygenase ausR are still functional. In Emericella nidulans (strain FGSC A4 / ATCC 38163 / CBS 112.46 / NRRL 194 / M139) (Aspergillus nidulans), this protein is Iron/alpha-ketoglutarate-dependent dioxygenase ausU.